The following is a 324-amino-acid chain: NAC domain-containing protein 30 (324 aa).

The region spanning methionine 9–lysine 158 is the NAC domain. The DNA-binding element occupies isoleucine 109–arginine 164. The segment covering leucine 232 to leucine 244 has biased composition (low complexity). The interval leucine 232 to glutamate 259 is disordered.

It belongs to the plant vascular related NAC-domain protein family. As to quaternary structure, forms homodimer and heterodimers with other VND proteins (e.g. NAC037/VND1, NAC076/VND2 and NAC105/VND3) via their N-termini. Interacts with NAC083/VNI2. Expressed in developing protoxylems in roots and shoots. Detected in root protoxylem poles and in vessels of protoxylems, outermost metaxylems, inner metaxylems, shoots and hypocotyls. Expressed in roots, hypocotyls, cotyledons and leaves. Accumulates in the xylem but not in interfascicular fibers or pith cells in inflorescence stems. Present in developing vessels of the secondary xylem in roots undergoing secondary growth.

It localises to the nucleus. Functionally, transcription activator that binds to the secondary wall NAC binding element (SNBE), 5'-(T/A)NN(C/T)(T/C/G)TNNNNNNNA(A/C)GN(A/C/T)(A/T)-3', in the promoter of target genes (e.g. genes involved in secondary wall biosynthesis, cell wall modification such as xylan accumulation, and programmed cell death). Involved in xylem formation in roots and shoots, especially regulating protoxylem vessel differentiation by promoting immature xylem vessel-specific genes expression. Can activate the expression of several genes including XCP1, MYB46, NAC010/SND3, MYB103, MYB58, MYB63, MYB83, KNAT7, ASL19 and ASL20. In terms of biological role, required for the soilborne fungal pathogen Verticillium longisporum-induced transdifferentiation of chloroplast-containing bundle sheath cells to functional xylem elements leading to stunted growth, vein clearing, and leaf chloroses, as well as xylem hyperplasia within the vasculature of leaves, hypocotyls, and roots due to reinitiation of cambial activity and transdifferentiation of xylem parenchyma cells. This developmental reprogramming also mediates an increased drought stress tolerance. In Arabidopsis thaliana (Mouse-ear cress), this protein is NAC domain-containing protein 30.